The following is a 180-amino-acid chain: Alkyl hydroperoxide reductase AhpD (180 aa).

Catalysis depends on Cys131, which acts as the Proton donor. Cysteines 131 and 134 form a disulfide. The active-site Cysteine sulfenic acid (-SOH) intermediate is Cys134.

It belongs to the AhpD family.

The catalysed reaction is N(6)-[(R)-dihydrolipoyl]-L-lysyl-[lipoyl-carrier protein] + a hydroperoxide = N(6)-[(R)-lipoyl]-L-lysyl-[lipoyl-carrier protein] + an alcohol + H2O. Antioxidant protein with alkyl hydroperoxidase activity. Required for the reduction of the AhpC active site cysteine residues and for the regeneration of the AhpC enzyme activity. In Hyphomonas neptunium (strain ATCC 15444), this protein is Alkyl hydroperoxide reductase AhpD.